Consider the following 343-residue polypeptide: Tetraacyldisaccharide 4'-kinase (343 aa).

53 to 60 (TCGGAGKT) contributes to the ATP binding site.

It belongs to the LpxK family.

It carries out the reaction a lipid A disaccharide + ATP = a lipid IVA + ADP + H(+). It participates in glycolipid biosynthesis; lipid IV(A) biosynthesis; lipid IV(A) from (3R)-3-hydroxytetradecanoyl-[acyl-carrier-protein] and UDP-N-acetyl-alpha-D-glucosamine: step 6/6. In terms of biological role, transfers the gamma-phosphate of ATP to the 4'-position of a tetraacyldisaccharide 1-phosphate intermediate (termed DS-1-P) to form tetraacyldisaccharide 1,4'-bis-phosphate (lipid IVA). This is Tetraacyldisaccharide 4'-kinase from Bartonella quintana (strain Toulouse) (Rochalimaea quintana).